Here is a 365-residue protein sequence, read N- to C-terminus: 5-hydroxytryptamine receptor 1E (365 aa).

Residues 1–22 are Extracellular-facing; that stretch reads MNITNCTTDASMVVRPKTVTEK. N-linked (GlcNAc...) asparagine glycans are attached at residues asparagine 2 and asparagine 5. The chain crosses the membrane as a helical span at residues 23–47; it reads MLICMTLVIITTLTMLLNSAVIMAI. Residues 48–59 are Cytoplasmic-facing; that stretch reads CTTKKLHQPANY. The helical transmembrane segment at 60–82 threads the bilayer; that stretch reads LICSLAVTDLLVAVLVMPLSIMY. Over 83–96 the chain is Extracellular; that stretch reads IVMDSWRLGYFICE. Cysteine 95 and cysteine 173 are disulfide-bonded. The helical transmembrane segment at 97–118 threads the bilayer; the sequence is VWLSVDMTCCTCSILHLCVIAL. Residues aspartate 102 and threonine 107 each contribute to the ergotamine site. The DRY motif; important for ligand-induced conformation changes motif lies at 119–121; that stretch reads DRY. At 119-138 the chain is on the cytoplasmic side; it reads DRYWAITNAIEYARKRTAKR. The helical transmembrane segment at 139–160 threads the bilayer; that stretch reads AGLMILTVWTISIFISMPPLFW. Residues 161–179 are Extracellular-facing; it reads RSHRQLSPPPSQCTIQHDH. Isoleucine 175 lines the ergotamine pocket. Residues 180 to 202 form a helical membrane-spanning segment; that stretch reads VIYTIYSTFGAFYIPLTLILILY. At 203 to 291 the chain is on the cytoplasmic side; the sequence is YRIYHAAKSL…SSTRERKAAR (89 aa). The chain crosses the membrane as a helical span at residues 292 to 314; sequence ILGLILGAFILSWLPFFIKELIV. Topologically, residues 315–324 are extracellular; that stretch reads GLSIYTVSSE. The helical transmembrane segment at 325 to 347 threads the bilayer; it reads VGDFLTWLGYVNSLINPLLYTSF. The NPxxY motif; important for ligand-induced conformation changes and signaling motif lies at 340–344; the sequence is NPLLY. At 348 to 365 the chain is on the cytoplasmic side; sequence NEDFKLAFKKLIRCREHT.

It belongs to the G-protein coupled receptor 1 family. As to expression, detected in the brain with the greatest abundance in the hippocampus, followed by the olfactory bulb. Lower levels are detected in the cortex, thalamus, pons, hypothalamus, midbrain, striatum, and cerebellum.

The protein resides in the cell membrane. In terms of biological role, G-protein coupled receptor for 5-hydroxytryptamine (serotonin). Also functions as a receptor for various alkaloids and psychoactive substances. Ligand binding causes a conformation change that triggers signaling via guanine nucleotide-binding proteins (G proteins) and modulates the activity of down-stream effectors, such as adenylate cyclase. Signaling inhibits adenylate cyclase activity. This chain is 5-hydroxytryptamine receptor 1E (5HT1E), found in Cavia porcellus (Guinea pig).